A 430-amino-acid chain; its full sequence is MLSFGGSLLSHSDIASRNKFSIDYSQFKAFFPGNWKFSNSKDKKPVRSPTLDEPVGDVDIDIFDVSKFYPLKRLSSIPEKIRANYHEELQTTSYDLVRNPFTHGLFCVVFYHQNKSYLKMGVTDNFNAFEEDSRVYQYGVNHKLSCKNLLLAINYSPKTYTKIFDFLRNGRAPLQVLVHHCMLYNFYPEDFQDALWCAVQAHVMNQVRLGRATLLHARACYQKIGDIRMYLIDPHDLYFSPNSLKWLIICSKQFQALVHLEVKMDTLKIFRRRSKYFNLARSCVSGFELSWLIMMTSIGSNASAVPVHAYLASKRILYPSIIPEEIFFMRKFDSSLFKDIKNIHELLGFLGRLFMDLQDCEKFHHDYTEYHCYRIGKPLYQNYEEEALRKKSQGVKDADFIKPLVTNTRTAEKYKAFFEYKRNIVLKKQS.

This sequence belongs to the UPF0300 family.

It is found in the mitochondrion. Has a role in meiosis. This chain is Meiotically up-regulated gene 132 protein (mug132), found in Schizosaccharomyces pombe (strain 972 / ATCC 24843) (Fission yeast).